The primary structure comprises 397 residues: Acetate kinase (397 aa).

Asn-8 provides a ligand contact to Mg(2+). Lys-15 lines the ATP pocket. Arg-89 is a substrate binding site. Asp-146 functions as the Proton donor/acceptor in the catalytic mechanism. Residues 206–210, 281–283, and 329–333 contribute to the ATP site; these read HLGNG, DLR, and GVGEN. A Mg(2+)-binding site is contributed by Glu-382.

This sequence belongs to the acetokinase family. In terms of assembly, homodimer. Requires Mg(2+) as cofactor. The cofactor is Mn(2+).

It is found in the cytoplasm. The enzyme catalyses acetate + ATP = acetyl phosphate + ADP. Its pathway is metabolic intermediate biosynthesis; acetyl-CoA biosynthesis; acetyl-CoA from acetate: step 1/2. Catalyzes the formation of acetyl phosphate from acetate and ATP. Can also catalyze the reverse reaction. This is Acetate kinase from Bacillus cereus (strain ATCC 14579 / DSM 31 / CCUG 7414 / JCM 2152 / NBRC 15305 / NCIMB 9373 / NCTC 2599 / NRRL B-3711).